The primary structure comprises 114 residues: Kita-kyushu lung cancer antigen 1 homolog (114 aa).

Over 1–4 the chain is Cytoplasmic; the sequence is MNVY. A helical; Signal-anchor for type II membrane protein transmembrane segment spans residues 5-22; sequence LLLASGILCALMTVFWKY. Over 23 to 114 the chain is Extracellular; the sequence is RRFQRNTGEM…RSASAHRKST (92 aa). N84 carries N-linked (GlcNAc...) asparagine glycosylation.

Its subcellular location is the cell membrane. The protein is Kita-kyushu lung cancer antigen 1 homolog (CT83) of Macaca fascicularis (Crab-eating macaque).